The sequence spans 52 residues: Phospholamban (52 aa).

Methionine 1 bears the N-acetylmethionine mark. The Cytoplasmic portion of the chain corresponds to 1–31 (MEKVQYLTRSAIRRASTIEMPQQARQNLQNL). Serine 16 carries the phosphoserine; by PKA modification. Threonine 17 is subject to Phosphothreonine; by CaMK2. The helical transmembrane segment at 32-52 (FINFCLILICLLLICIIVMLL) threads the bilayer. The S-palmitoyl cysteine moiety is linked to residue cysteine 36.

Belongs to the phospholamban family. Homopentamer. Can also form heterooligomers with other sarcoplasmic/endoplasmic reticulum calcium ATPase (SERCA) regulators ARLN, ERLN, SLN and STRIT1/DWORF. Monomer. Interacts with HAX1. Interacts as a monomer with ATP2A2; the interaction decreases ATP2A2 Ca(2+) affinity. Interacts with VMP1; VMP1 competes with PLN and SLN to prevent them from forming an inhibitory complex with ATP2A2. Interacts with S100A1 in a Ca(2+)-dependent manner. Phosphorylated at Thr-17 by CaMK2, and in response to beta-adrenergic stimulation. Phosphorylation by DMPK may stimulate sarcoplasmic reticulum calcium uptake in cardiomyocytes. Phosphorylation by PKA abolishes the inhibition of ATP2A2-mediated calcium uptake. In terms of processing, palmitoylated by ZDHHC16, promoting formation of the homopentamer. Post-translationally, in elongated spermatids, proteolytically cleaved by SPPL2C which modulates intracellular Ca(2+) homeostasis. As to expression, expressed in testis (at protein level). In brain, expressed specifically in GABAergic GAD67+ neurons of the thalamic reticular nucleus where it colocalizes with ATP2A2/SERCA2 (at protein level). Expressed in the bladder and in the atria and ventricles of the heart.

Its subcellular location is the endoplasmic reticulum membrane. The protein localises to the sarcoplasmic reticulum membrane. It is found in the mitochondrion membrane. The protein resides in the membrane. In terms of biological role, reversibly inhibits the activity of ATP2A2/SERCA2 in cardiac sarcoplasmic reticulum by decreasing the apparent affinity of the ATPase for Ca(2+). Binds preferentially to the ATP-bound E1 conformational form of ATP2A2 which predominates at low Ca(2+) concentrations during the diastolic phase of the cardiac cycle. Inhibits ATP2A2 Ca(2+) affinity by disrupting its allosteric activation by ATP. Modulates the contractility of the heart muscle in response to physiological stimuli via its effects on ATP2A2. Modulates calcium re-uptake during muscle relaxation and plays an important role in calcium homeostasis in the heart muscle. The degree of ATP2A2 inhibition depends on the oligomeric state of PLN. ATP2A2 inhibition is alleviated by PLN phosphorylation. Also inhibits the activity of ATP2A3/SERCA3. Controls intracellular Ca(2+) levels in elongated spermatids and may play a role in germ cell differentiation. In the thalamic reticular nucleus of the brain, plays a role in the regulation of sleep patterns and executive functioning. This chain is Phospholamban, found in Mus musculus (Mouse).